Consider the following 421-residue polypeptide: Gamma-glutamyl phosphate reductase (421 aa).

This sequence belongs to the gamma-glutamyl phosphate reductase family.

The protein resides in the cytoplasm. It carries out the reaction L-glutamate 5-semialdehyde + phosphate + NADP(+) = L-glutamyl 5-phosphate + NADPH + H(+). The protein operates within amino-acid biosynthesis; L-proline biosynthesis; L-glutamate 5-semialdehyde from L-glutamate: step 2/2. In terms of biological role, catalyzes the NADPH-dependent reduction of L-glutamate 5-phosphate into L-glutamate 5-semialdehyde and phosphate. The product spontaneously undergoes cyclization to form 1-pyrroline-5-carboxylate. The sequence is that of Gamma-glutamyl phosphate reductase from Acinetobacter baumannii (strain ATCC 17978 / DSM 105126 / CIP 53.77 / LMG 1025 / NCDC KC755 / 5377).